The following is a 210-amino-acid chain: Probable septum site-determining protein MinC (210 aa).

This sequence belongs to the MinC family. In terms of assembly, interacts with MinD and FtsZ.

Its function is as follows. Cell division inhibitor that blocks the formation of polar Z ring septums. Rapidly oscillates between the poles of the cell to destabilize FtsZ filaments that have formed before they mature into polar Z rings. Prevents FtsZ polymerization. This is Probable septum site-determining protein MinC from Thermotoga sp. (strain RQ2).